The following is a 65-amino-acid chain: Small hydrophobic protein (65 aa).

Over 1–20 (MGNTSITIEFTSKFWPYFTL) the chain is Intravirion. The interaction with host BCAP31 stretch occupies residues 6-15 (ITIEFTSKFW). A helical; Signal-anchor for type II membrane protein transmembrane segment spans residues 21–44 (IHMILTLISLLIIITIMIAILNKL). The interaction with small-molecule inhibitor stretch occupies residues 38-43 (IAILNK). Residues 45–65 (SEHKTFCNNTLELGQMHQINT) lie on the Virion surface side of the membrane. N-linked (GlcNAc...) asparagine; by host glycosylation occurs at Asn52.

This sequence belongs to the orthopneumovirus small hydrophobic protein family. In terms of assembly, homopentamer forming a funnel-like pore. Interacts with glycoprotein G; this interaction occurs on the surface of virion particles and infected cells. Interacts with host BCAP31 (via C-terminus); this interaction is direct. Post-translationally, four species of SH have been detected in infected cell cytoplasm: a 7.5 kDa non-glycosylated form (SH0), a 13-15 kDa form that contains one or two N-linked carbohydrate side chains of the high-mannose type (SHg), a 21-30 kDa polylactosaminoglycan-modified form of the protein (SHp), and the isoform generated by alternative translational initiation. Of these different forms, SH0 is by far the most abundant protein detected during virus infection. Tyrosine phosphorylated.

The protein localises to the virion membrane. Its subcellular location is the host cell membrane. It is found in the host Golgi apparatus membrane. The protein resides in the host endoplasmic reticulum membrane. Its activity is regulated as follows. Channel activity is inhibited by copper. Also inhibited by small-molecule pyronin B. Viroporin that forms a homopentameric ion channel displaying low ion selectivity. May play a role in virus morphogenesis and pathogenicity at various stages of the viral life cycle. Accumulates at the membrane of the Golgi apparatus in infected cells and may facilitate virus release by modifying the secretory pathway. May enhance host membrane permeability and disrupt cellular ion homeostasis, which can be sensed as damage-associated molecular patterns/danger signals, triggering NLRP3 inflammasome activation and inflammatory immune response. Also inhibits host TNFA-mediated signaling pathway and may delay apoptosis, allowing time for the virus to replicate. This Homo sapiens (Human) protein is Small hydrophobic protein.